A 110-amino-acid polypeptide reads, in one-letter code: Secreted RxLR effector protein 89 (110 aa).

Positions 1-22 (MTSVVIVVSVAVLLGVLVITDS) are cleaved as a signal peptide. Asn-29 carries N-linked (GlcNAc...) asparagine glycosylation. Positions 61–74 (RHLRTILQWWQERR) match the RxLR-dEER motif.

Belongs to the RxLR effector family.

The protein resides in the secreted. Its subcellular location is the host nucleus. It is found in the host cytoplasm. Functionally, secreted effector that completely suppresses the host cell death induced by cell death-inducing proteins. The polypeptide is Secreted RxLR effector protein 89 (Plasmopara viticola (Downy mildew of grapevine)).